A 266-amino-acid polypeptide reads, in one-letter code: Type II iodothyronine deiodinase (266 aa).

Over 1 to 9 the chain is Lumenal; it reads MGLLSVDLL. The helical; Signal-anchor for type III membrane protein transmembrane segment at 10–34 threads the bilayer; it reads ITLQILPVFFSNCLFLALYDSVILL. Residues 35–266 are Cytoplasmic-facing; sequence KHVALLLSRS…KNFSKRUILD (232 aa). Sec-130 is a catalytic residue. 2 non-standard amino acids (selenocysteine) are found at residues Sec-130 and Sec-263.

The protein belongs to the iodothyronine deiodinase family. As to quaternary structure, predominantly monomer. Can form homodimers but homodimerization is not essential for enzyme activity. Interacts with USP20 and USP33. Interacts with MARCHF6. Ubiquitinated by MARCHF6, leading to its degradation by the proteasome. Deubiquitinated by USP20 and USP33. In terms of tissue distribution, expressed in cerebral cortex, cerebellum, pituitary gland, mostly in anterior pituitary gland, and pineal gland, as well as in brown adipose tissue (BAT).

It is found in the endoplasmic reticulum membrane. It catalyses the reaction 3,3',5-triiodo-L-thyronine + iodide + A + H(+) = L-thyroxine + AH2. It carries out the reaction 3,3'-diiodo-L-thyronine + iodide + A + H(+) = 3,3',5'-triiodo-L-thyronine + AH2. The catalysed reaction is 3'-iodo-L-thyronine + iodide + A + H(+) = 3',5'-diiodo-L-thyronine + AH2. The enzyme catalyses 3,3'-diiodothyronamine + iodide + A + H(+) = 3,3',5'-triiodothyronamine + AH2. It catalyses the reaction 3'-iodothyronamine + iodide + A + H(+) = 3',5'-diiodothyronamine + AH2. In terms of biological role, plays a crucial role in the metabolism of thyroid hormones (TH) and has specific roles in TH activation and inactivation by deiodination. Catalyzes the deiodination of L-thyroxine (T4) to 3,5,3'-triiodothyronine (T3) and 3',5'-diiodothyronine (3',5'-T2) to 3'-monoiodothyronine (3'-T1) via outer-ring deiodination (ORD). Catalyzes the deiodination of 3,3',5'-triiodothyronine (rT3) to 3,3'-diiodothyronine (3,3'-T2) via ORD. Catalyzes the phenolic ring deiodinations of 3,3',5'-triiodothyronamine and 3',5'- diiodothyronamine. The protein is Type II iodothyronine deiodinase (Dio2) of Rattus norvegicus (Rat).